Consider the following 442-residue polypeptide: tRNA modification GTPase MnmE (442 aa).

(6S)-5-formyl-5,6,7,8-tetrahydrofolate is bound by residues arginine 27, glutamate 84, and lysine 124. The 146-residue stretch at 221-366 (GLHVVIVGAP…LLDALQAFAE (146 aa)) folds into the TrmE-type G domain. Residues 231-236 (NAGKSS), 250-256 (SEEAGTT), and 275-278 (DTAG) each bind GTP. Residues serine 235 and threonine 256 each contribute to the Mg(2+) site. A (6S)-5-formyl-5,6,7,8-tetrahydrofolate-binding site is contributed by lysine 442.

The protein belongs to the TRAFAC class TrmE-Era-EngA-EngB-Septin-like GTPase superfamily. TrmE GTPase family. In terms of assembly, homodimer. Heterotetramer of two MnmE and two MnmG subunits. K(+) serves as cofactor.

The protein resides in the cytoplasm. Its function is as follows. Exhibits a very high intrinsic GTPase hydrolysis rate. Involved in the addition of a carboxymethylaminomethyl (cmnm) group at the wobble position (U34) of certain tRNAs, forming tRNA-cmnm(5)s(2)U34. The chain is tRNA modification GTPase MnmE from Brucella abortus (strain 2308).